Reading from the N-terminus, the 305-residue chain is UDP-3-O-acyl-N-acetylglucosamine deacetylase (305 aa).

Zn(2+) contacts are provided by His79, His238, and Asp242. Residue His265 is the Proton donor of the active site.

Belongs to the LpxC family. Requires Zn(2+) as cofactor.

It catalyses the reaction a UDP-3-O-[(3R)-3-hydroxyacyl]-N-acetyl-alpha-D-glucosamine + H2O = a UDP-3-O-[(3R)-3-hydroxyacyl]-alpha-D-glucosamine + acetate. Its pathway is glycolipid biosynthesis; lipid IV(A) biosynthesis; lipid IV(A) from (3R)-3-hydroxytetradecanoyl-[acyl-carrier-protein] and UDP-N-acetyl-alpha-D-glucosamine: step 2/6. Catalyzes the hydrolysis of UDP-3-O-myristoyl-N-acetylglucosamine to form UDP-3-O-myristoylglucosamine and acetate, the committed step in lipid A biosynthesis. This is UDP-3-O-acyl-N-acetylglucosamine deacetylase from Escherichia fergusonii (strain ATCC 35469 / DSM 13698 / CCUG 18766 / IAM 14443 / JCM 21226 / LMG 7866 / NBRC 102419 / NCTC 12128 / CDC 0568-73).